The following is a 313-amino-acid chain: Ribosomal RNA small subunit methyltransferase H (313 aa).

Residues 35–37, Asp-55, Phe-80, Asp-102, and Gln-109 each bind S-adenosyl-L-methionine; that span reads GGH.

The protein belongs to the methyltransferase superfamily. RsmH family.

It is found in the cytoplasm. The enzyme catalyses cytidine(1402) in 16S rRNA + S-adenosyl-L-methionine = N(4)-methylcytidine(1402) in 16S rRNA + S-adenosyl-L-homocysteine + H(+). Functionally, specifically methylates the N4 position of cytidine in position 1402 (C1402) of 16S rRNA. The sequence is that of Ribosomal RNA small subunit methyltransferase H from Shewanella frigidimarina (strain NCIMB 400).